A 136-amino-acid polypeptide reads, in one-letter code: Large ribosomal subunit protein bL20 (136 aa).

Belongs to the bacterial ribosomal protein bL20 family.

Its function is as follows. Binds directly to 23S ribosomal RNA and is necessary for the in vitro assembly process of the 50S ribosomal subunit. It is not involved in the protein synthesizing functions of that subunit. This is Large ribosomal subunit protein bL20 from Tropheryma whipplei (strain TW08/27) (Whipple's bacillus).